The sequence spans 668 residues: MHFAESVQTPPPSRPSDQSLNQHVLDLGSWDQGCRDLMLVNWLCVDFRQRLLNVLYTSCQKNFNEARSLARERLLDLVQRIASSDNLHGALYTPPSLDSRSSATPPQNLPPTPDLVQCIRGCDEPFPPLSLPTPAQIDTQENERLMCTPEDITYHDRDSQVVAQARRRSPPGTGPAVLPPIAFDNHELPPGCSDFLNFDLLSDGEVFSIGTHAGVTSDVCDSMPLDHDLSEMELDPPPDATTTTTTTTVSSPNVHSTHHLAIPNPEPGTPTPPSPLAGTSLTRKPPGTPDSPSAASQRRQRQRRAAAHATYRSTPSPCQSADTHIGAENEVAEPAPPSPSTRWTHSIPTHLPSPDTVLATFTHHLGRGKQSIALLLTRLFYAIGSPDALSQLRDAVKLSREQTPAIIPVSSTNDLATTVKALDHLDSMTTLSHILRRYYLVRLLEHRTRFEQDHVTAKQAWRPPKRMLKYDCARVELIKNGGNCSSSSCSSSASKKNEEKREPPLKYRSKSQALADLMQMLYPDLKPAVAEGKDCVYSRKLTKLRNRLSCARNWYRFEQAFPGAILALIPCAGRFSVSIDQIEKLPSDTVQIFLDYLQEHRGVFSRCVSQTLGTGIFSVLARTSADAAPTFAFEKVEEEGFGDLLYDTDELVSLSIEYDRYCDLNSNA.

5 disordered regions span residues 1-20 (MHFA…DQSL), 92-113 (YTPP…PPTP), 224-322 (PLDH…QSAD), 330-349 (EVAE…SIPT), and 483-506 (NCSS…PPLK). A compositionally biased stretch (polar residues) spans 96 to 106 (SLDSRSSATPP). Positions 264 to 275 (NPEPGTPTPPSP) are enriched in pro residues. Residues 311–322 (YRSTPSPCQSAD) are compositionally biased toward polar residues. The span at 484 to 494 (CSSSSCSSSAS) shows a compositional bias: low complexity. Residues 495–505 (KKNEEKREPPL) are compositionally biased toward basic and acidic residues.

Its pathway is antifungal biosynthesis. Its function is as follows. Part of the gene cluster that mediates the biosynthesis of echinocandin B, a fungal lipidated cyclic hexapeptide that acts as an antifungal agent. Linoleoyl-AMP, produced by the fatty-acyl-AMP ligase ecdI, is transferred to the initiation carrier domain (T0) of ecdA. The linoleoyl-S-phosphopantetheinyl-T0 is sequentially extended with L-ornithine, L-threonine, L-proline, L-homotyrosine, L-threonine, and 4R-methyl-L-proline to form the linear hexapeptide. Thereafter, the terminal condensation (C7) performs macrocyclization of the NRPS product and the cyclic scaffold is released from ecdA. All six of the amino acid residues are hydroxylated, including 4R,5R-dihydroxy-L-ornithine, 4R-hydroxyl-L-proline, 3S,4S-dihydroxy-L-homotyrosine, and 3S-hydroxyl-4S-methyl-L-prolin. In the pathway, all the hydroxylation reactions are proposed to occur following completion of the cyclic peptide, so the unhydroxylated precursor produced by ecdA will undergo six rounds of hydroxylation. Five hydroxylase genes (ecdG, ecdH, ecdK, htyE and htyF) are embedded within the echinocandin B (ecd) and L-homotyrosine (hty) clusters. This chain is Echinocandin B biosynthetic cluster protein J, found in Aspergillus rugulosus (Emericella rugulosa).